A 304-amino-acid polypeptide reads, in one-letter code: Glycine--tRNA ligase alpha subunit (304 aa).

Belongs to the class-II aminoacyl-tRNA synthetase family. In terms of assembly, tetramer of two alpha and two beta subunits.

It is found in the cytoplasm. It catalyses the reaction tRNA(Gly) + glycine + ATP = glycyl-tRNA(Gly) + AMP + diphosphate. This is Glycine--tRNA ligase alpha subunit from Streptococcus agalactiae serotype III (strain NEM316).